The sequence spans 46 residues: Large ribosomal subunit protein bL34 (46 aa).

Belongs to the bacterial ribosomal protein bL34 family.

In Trichodesmium erythraeum (strain IMS101), this protein is Large ribosomal subunit protein bL34.